Here is a 358-residue protein sequence, read N- to C-terminus: 3-dehydroquinate synthase (358 aa).

NAD(+) contacts are provided by residues 70–75 (DGEQFK), 104–108 (GVIGD), 128–129 (TT), Lys-141, Lys-150, and 168–171 (CLHT). Residues Glu-183, His-246, and His-263 each contribute to the Zn(2+) site.

Belongs to the sugar phosphate cyclases superfamily. Dehydroquinate synthase family. Co(2+) is required as a cofactor. Zn(2+) serves as cofactor. The cofactor is NAD(+).

The protein localises to the cytoplasm. The enzyme catalyses 7-phospho-2-dehydro-3-deoxy-D-arabino-heptonate = 3-dehydroquinate + phosphate. It functions in the pathway metabolic intermediate biosynthesis; chorismate biosynthesis; chorismate from D-erythrose 4-phosphate and phosphoenolpyruvate: step 2/7. Its function is as follows. Catalyzes the conversion of 3-deoxy-D-arabino-heptulosonate 7-phosphate (DAHP) to dehydroquinate (DHQ). The sequence is that of 3-dehydroquinate synthase from Shewanella baltica (strain OS185).